The following is a 307-amino-acid chain: Protoheme IX farnesyltransferase (307 aa).

8 helical membrane-spanning segments follow: residues 24-44, 52-72, 115-135, 152-172, 179-199, 224-244, 245-265, and 284-304; these read ISLLKPRVMSLVIFTALVGLV, PVIAFTAILCIAVGAGAAGAL, VVLGLLVNVLAGALLAFTIFF, IVIGGLSGALPPMVAWAAASG, VILVAIIFFWTPPHFWALSLY, QILLYTLFLVPLALSPVMLGE, AGLAYGVVAGVTGLGMLLLAV, and FGFSILYLFLLFATLLAEALV.

It belongs to the UbiA prenyltransferase family. Protoheme IX farnesyltransferase subfamily.

The protein localises to the cell inner membrane. It catalyses the reaction heme b + (2E,6E)-farnesyl diphosphate + H2O = Fe(II)-heme o + diphosphate. It functions in the pathway porphyrin-containing compound metabolism; heme O biosynthesis; heme O from protoheme: step 1/1. In terms of biological role, converts heme B (protoheme IX) to heme O by substitution of the vinyl group on carbon 2 of heme B porphyrin ring with a hydroxyethyl farnesyl side group. The protein is Protoheme IX farnesyltransferase of Azorhizobium caulinodans (strain ATCC 43989 / DSM 5975 / JCM 20966 / LMG 6465 / NBRC 14845 / NCIMB 13405 / ORS 571).